Here is a 180-residue protein sequence, read N- to C-terminus: Protein SPMIP9 (180 aa).

As to quaternary structure, microtubule inner protein component of sperm flagellar doublet microtubules. Only detected after the mouse is 35 days old. Expression increases gradually from day 35 to 6 months, and remains stable after 54 days. Exclusively expressed in the epididymis and testis.

Its subcellular location is the nucleus. It localises to the cytoplasm. It is found in the cytoskeleton. The protein localises to the flagellum axoneme. In terms of biological role, microtubule inner protein (MIP) part of the dynein-decorated doublet microtubules (DMTs) in flagella axoneme. The protein is Protein SPMIP9 (Spmip9) of Mus musculus (Mouse).